The primary structure comprises 251 residues: Sec-independent protein translocase protein TatC (251 aa).

A run of 6 helical transmembrane segments spans residues 23–43, 73–93, 104–124, 159–179, 197–217, and 218–238; these read AFIIIFAICYYFSDYIYSFLL, SAFTAFTIIIPIIALECYLFI, IIAFILFMSPILFWCGSIFVF, LVIHLIIAFGIAFQLPIVIIV, IAVVINFIIAGILTPPDILSQ, and FALAIPLLLLYETSIIICNFI.

It belongs to the TatC family. The Tat system comprises two distinct complexes: a TatABC complex, containing multiple copies of TatA, TatB and TatC subunits, and a separate TatA complex, containing only TatA subunits. Substrates initially bind to the TatABC complex, which probably triggers association of the separate TatA complex to form the active translocon.

Its subcellular location is the cell inner membrane. Part of the twin-arginine translocation (Tat) system that transports large folded proteins containing a characteristic twin-arginine motif in their signal peptide across membranes. Together with TatB, TatC is part of a receptor directly interacting with Tat signal peptides. In Rickettsia prowazekii (strain Madrid E), this protein is Sec-independent protein translocase protein TatC.